Reading from the N-terminus, the 316-residue chain is Probable 5-dehydro-4-deoxyglucarate dehydratase (316 aa).

Belongs to the DapA family.

The catalysed reaction is 5-dehydro-4-deoxy-D-glucarate + H(+) = 2,5-dioxopentanoate + CO2 + H2O. Its pathway is carbohydrate acid metabolism; D-glucarate degradation; 2,5-dioxopentanoate from D-glucarate: step 2/2. In Corynebacterium glutamicum (strain R), this protein is Probable 5-dehydro-4-deoxyglucarate dehydratase.